The following is a 356-amino-acid chain: Histidinol-phosphate aminotransferase (356 aa).

Lysine 214 carries the post-translational modification N6-(pyridoxal phosphate)lysine.

It belongs to the class-II pyridoxal-phosphate-dependent aminotransferase family. Histidinol-phosphate aminotransferase subfamily. As to quaternary structure, homodimer. It depends on pyridoxal 5'-phosphate as a cofactor.

The enzyme catalyses L-histidinol phosphate + 2-oxoglutarate = 3-(imidazol-4-yl)-2-oxopropyl phosphate + L-glutamate. Its pathway is amino-acid biosynthesis; L-histidine biosynthesis; L-histidine from 5-phospho-alpha-D-ribose 1-diphosphate: step 7/9. This is Histidinol-phosphate aminotransferase from Escherichia coli O127:H6 (strain E2348/69 / EPEC).